The chain runs to 469 residues: 3-phosphoshikimate 1-carboxyvinyltransferase (469 aa).

Positions K21–K45 are disordered. 3-phosphoshikimate is bound by residues K52, S53, and R57. A phosphoenolpyruvate-binding site is contributed by K52. Phosphoenolpyruvate-binding residues include G125 and R153. 3-phosphoshikimate contacts are provided by S199, Q201, D352, and K379. Q201 is a phosphoenolpyruvate binding site. The Proton acceptor role is filled by D352. Phosphoenolpyruvate-binding residues include R383 and R426.

This sequence belongs to the EPSP synthase family. In terms of assembly, monomer.

It is found in the cytoplasm. It catalyses the reaction 3-phosphoshikimate + phosphoenolpyruvate = 5-O-(1-carboxyvinyl)-3-phosphoshikimate + phosphate. It participates in metabolic intermediate biosynthesis; chorismate biosynthesis; chorismate from D-erythrose 4-phosphate and phosphoenolpyruvate: step 6/7. Functionally, catalyzes the transfer of the enolpyruvyl moiety of phosphoenolpyruvate (PEP) to the 5-hydroxyl of shikimate-3-phosphate (S3P) to produce enolpyruvyl shikimate-3-phosphate and inorganic phosphate. In Bradyrhizobium diazoefficiens (strain JCM 10833 / BCRC 13528 / IAM 13628 / NBRC 14792 / USDA 110), this protein is 3-phosphoshikimate 1-carboxyvinyltransferase.